A 128-amino-acid polypeptide reads, in one-letter code: LQDGAYHEVDSSEMAFKIAGSMAFKEAARKAYAVILEPLMAVEVTTPEDYMGDVIGDLKGPRRQIRAMDERAGARVVQALVTLLDIFGYVGDLRSKTQGRASFSMQFDSYAEVPQHIAKKIVAKVRAQ.

Belongs to the GTP-binding elongation factor family. EF-G/EF-2 subfamily.

The protein resides in the cytoplasm. In terms of biological role, catalyzes the GTP-dependent ribosomal translocation step during translation elongation. During this step, the ribosome changes from the pre-translocational (PRE) to the post-translocational (POST) state as the newly formed A-site-bound peptidyl-tRNA and P-site-bound deacylated tRNA move to the P and E sites, respectively. Catalyzes the coordinated movement of the two tRNA molecules, the mRNA and conformational changes in the ribosome. This chain is Elongation factor G (fusA), found in Planobispora rosea.